The following is a 341-amino-acid chain: tRNA N6-adenosine threonylcarbamoyltransferase (341 aa).

The Fe cation site is built by histidine 111 and histidine 115. Residues 134–138 (LVSGG), aspartate 167, glycine 180, and asparagine 276 each bind substrate. Aspartate 304 serves as a coordination point for Fe cation.

It belongs to the KAE1 / TsaD family. Fe(2+) is required as a cofactor.

It is found in the cytoplasm. The catalysed reaction is L-threonylcarbamoyladenylate + adenosine(37) in tRNA = N(6)-L-threonylcarbamoyladenosine(37) in tRNA + AMP + H(+). Required for the formation of a threonylcarbamoyl group on adenosine at position 37 (t(6)A37) in tRNAs that read codons beginning with adenine. Is involved in the transfer of the threonylcarbamoyl moiety of threonylcarbamoyl-AMP (TC-AMP) to the N6 group of A37, together with TsaE and TsaB. TsaD likely plays a direct catalytic role in this reaction. The sequence is that of tRNA N6-adenosine threonylcarbamoyltransferase from Pseudomonas aeruginosa (strain LESB58).